The chain runs to 122 residues: Large ribosomal subunit protein bL12 (122 aa).

The protein belongs to the bacterial ribosomal protein bL12 family. As to quaternary structure, homodimer. Part of the ribosomal stalk of the 50S ribosomal subunit. Forms a multimeric L10(L12)X complex, where L10 forms an elongated spine to which 2 to 4 L12 dimers bind in a sequential fashion. Binds GTP-bound translation factors.

Its function is as follows. Forms part of the ribosomal stalk which helps the ribosome interact with GTP-bound translation factors. Is thus essential for accurate translation. The polypeptide is Large ribosomal subunit protein bL12 (Clostridium botulinum (strain 657 / Type Ba4)).